The chain runs to 2121 residues: PAM2 domain-containing protein UPA2 (2121 aa).

A PAM2 1 motif is present at residues 1-17; sequence MEGSSLNVAAPVFKPSG. Disordered stretches follow at residues 14 to 46, 262 to 302, 375 to 397, 475 to 507, 522 to 543, and 586 to 819; these read KPSG…AVHA, QPED…SALT, AATT…PPST, ARRR…SSGG, ANSD…QKPL, and DLGR…QFSR. Residues 339-599 are effector domain; the sequence is PWPYSLGLPD…GFGYEPQSPN (261 aa). The segment covering 596 to 607 has biased composition (polar residues); sequence QSPNAAPNGTTS. Acidic residues-rich tracts occupy residues 626-637 and 646-658; these read EENDELGFDGEE and EDAD…EEPN. Over residues 679 to 689 the composition is skewed to basic and acidic residues; that stretch reads DGHDRYADDNQ. Residues 690–712 show a composition bias toward polar residues; it reads SHASNDDSLQDSLTPSDEQFSNP. A compositionally biased stretch (basic and acidic residues) spans 719–735; sequence REERILRRQHRAAERAA. Over residues 736–745 the composition is skewed to basic residues; the sequence is RRERKQRQRG. Polar residues-rich tracts occupy residues 749–758 and 777–788; these read SDNTLPSSSI and NPRNGNTISNPS. 2 short sequence motifs (PAM2) span residues 858–874 and 920–937; these read SGIS…KFGG and TNAA…PGLF. A compositionally biased stretch (polar residues) spans 950 to 960; sequence NSLSASPSIAV. The tract at residues 950 to 1012 is disordered; sequence NSLSASPSIA…PSPPRPKASA (63 aa). Basic and acidic residues predominate over residues 966–981; that stretch reads GADHRETENRDMQGRE. The PAM2 4 signature appears at 1046–1063; sequence SHESRLTADAPSFVPTWA. Disordered regions lie at residues 1076-1096, 1119-1261, and 1337-1369; these read KRPS…KDLP, SKDD…EEES, and SHAR…NSSL. Residues 1198–1207 show a composition bias toward polar residues; sequence HSPSISQTSD. Residues 1248 to 1261 show a composition bias toward acidic residues; it reads GGNDEDDYEDEEES. A compositionally biased stretch (polar residues) spans 1345–1369; the sequence is ETQSTIRPLRQRNSSSDVKTANSSL. A coiled-coil region spans residues 1783–2054; it reads LEKQAQANAD…EAKLQTLTAS (272 aa). The interval 2099-2121 is disordered; sequence SFASTAGSQGKKEVEVDEGGWWS. Residues 2118–2120 carry the GWW motif; that stretch reads GWW.

It belongs to the UPA1 PAM2 domain-binding protein family. Might form homodimers via its C-terminal coiled-coil domain. Part of large ribonucleoprotein complexes (mRNPs) containing RNA-binding proteins RRM4 and PAB1, endosome-binding protein UPA1, core scaffold protein UPA2 and associated factor GRP1. Interacts (via PAM2 motifs) with PAB1.

The protein localises to the cytoplasm. It localises to the cytoskeleton. Its subcellular location is the endosome. Core component of endosomal mRNA transport and appears to carry out crucial scaffolding functions. The endosomal mRNA transport regulates polarity of the infectious hyphae by transporting a broad spectrum of cargo mRNAs from the nucleus to cell poles. The chain is PAM2 domain-containing protein UPA2 from Mycosarcoma maydis (Corn smut fungus).